A 559-amino-acid chain; its full sequence is 2,3-bisphosphoglycerate-independent phosphoglycerate mutase (559 aa).

Mn(2+)-binding residues include Asp28 and Ser81. Residue Ser81 is the Phosphoserine intermediate of the active site. Substrate is bound by residues His140, 170–171 (RD), Arg206, Arg213, 286–289 (RADR), and Lys361. The Mn(2+) site is built by Asp430, His434, Asp471, His472, and His501.

It belongs to the BPG-independent phosphoglycerate mutase family. Monomer. The cofactor is Mn(2+).

It is found in the cytoplasm. The catalysed reaction is (2R)-2-phosphoglycerate = (2R)-3-phosphoglycerate. It participates in carbohydrate degradation; glycolysis; pyruvate from D-glyceraldehyde 3-phosphate: step 3/5. Its function is as follows. Catalyzes the interconversion of 2-phosphoglycerate and 3-phosphoglycerate. The protein is 2,3-bisphosphoglycerate-independent phosphoglycerate mutase (PGM1) of Mesembryanthemum crystallinum (Common ice plant).